A 399-amino-acid polypeptide reads, in one-letter code: F420-dependent formate dehydrogenase subunit beta (399 aa).

4Fe-4S ferredoxin-type domains are found at residues 287–307 (TEYMDDFSRCLKCYGCREACP) and 339–367 (ERMLHMVESCTNCGQCEEVCPGEIPLAKI). [4Fe-4S] cluster-binding residues include cysteine 296, cysteine 299, cysteine 302, cysteine 306, cysteine 348, cysteine 351, cysteine 354, and cysteine 358.

The protein belongs to the FrhB family. As to quaternary structure, dimer of an alpha (FdhA) and a beta (FdhB) subunit. It depends on [4Fe-4S] cluster as a cofactor. Requires FAD as cofactor. The cofactor is Zn(2+).

The catalysed reaction is oxidized coenzyme F420-(gamma-L-Glu)(n) + formate + 2 H(+) = reduced coenzyme F420-(gamma-L-Glu)(n) + CO2. Its activity is regulated as follows. Is extremely sensitive to oxygen. Contains a FAD that is required for coenzyme F420-dependent activity but not for methyl viologen-dependent activity. Preincubation of the FAD-depleted enzyme with FAD restores coenzyme F420-dependent activity. Neither FMN nor FADH2 can replace FAD. Strongly inhibited by cyanide, azide, alpha,alpha-dipyridyl and 1,10-phenanthroline. Catalyzes the oxidation of formate to carbon dioxide, with coenzyme F420 as the electron acceptor. In vitro can also use methyl viologen, 7,8-didemethyl-8-hydroxy-5-deazariboflavin (or FO, a hydrolytic derivative of coenzyme F420), FMN and FAD as electron acceptors, but not NAD(+) or NADP(+). This is F420-dependent formate dehydrogenase subunit beta from Methanobacterium formicicum.